Reading from the N-terminus, the 431-residue chain is Adenylosuccinate synthetase (431 aa).

Residues 12–18 (GDEGKGK) and 40–42 (GHT) contribute to the GTP site. Asp13 (proton acceptor) is an active-site residue. 2 residues coordinate Mg(2+): Asp13 and Gly40. IMP-binding positions include 13–16 (DEGK), 38–41 (NAGH), Thr129, Arg143, Gln224, Thr239, and Arg303. His41 serves as the catalytic Proton donor. 299–305 (VTTGRAR) contacts substrate. GTP is bound by residues Arg305, 331-333 (KLD), and 413-415 (GVG).

The protein belongs to the adenylosuccinate synthetase family. As to quaternary structure, homodimer. It depends on Mg(2+) as a cofactor.

It localises to the cytoplasm. It carries out the reaction IMP + L-aspartate + GTP = N(6)-(1,2-dicarboxyethyl)-AMP + GDP + phosphate + 2 H(+). It functions in the pathway purine metabolism; AMP biosynthesis via de novo pathway; AMP from IMP: step 1/2. Functionally, plays an important role in the de novo pathway of purine nucleotide biosynthesis. Catalyzes the first committed step in the biosynthesis of AMP from IMP. This Mycobacteroides abscessus (strain ATCC 19977 / DSM 44196 / CCUG 20993 / CIP 104536 / JCM 13569 / NCTC 13031 / TMC 1543 / L948) (Mycobacterium abscessus) protein is Adenylosuccinate synthetase.